A 412-amino-acid chain; its full sequence is NADH-quinone oxidoreductase subunit D (412 aa).

It belongs to the complex I 49 kDa subunit family. As to quaternary structure, NDH-1 is composed of 14 different subunits. Subunits NuoB, C, D, E, F, and G constitute the peripheral sector of the complex.

Its subcellular location is the cell inner membrane. The catalysed reaction is a quinone + NADH + 5 H(+)(in) = a quinol + NAD(+) + 4 H(+)(out). Functionally, NDH-1 shuttles electrons from NADH, via FMN and iron-sulfur (Fe-S) centers, to quinones in the respiratory chain. The immediate electron acceptor for the enzyme in this species is believed to be ubiquinone. Couples the redox reaction to proton translocation (for every two electrons transferred, four hydrogen ions are translocated across the cytoplasmic membrane), and thus conserves the redox energy in a proton gradient. The polypeptide is NADH-quinone oxidoreductase subunit D (Sulfurimonas denitrificans (strain ATCC 33889 / DSM 1251) (Thiomicrospira denitrificans (strain ATCC 33889 / DSM 1251))).